Consider the following 428-residue polypeptide: Putative aminotransferase MSMEG_6286/MSMEI_6121 (428 aa).

Glycine 37 serves as a coordination point for substrate. Residues tyrosine 72, alanine 102 to glutamate 105, asparagine 191, alanine 222 to valine 225, and serine 256 to serine 258 contribute to the pyridoxal 5'-phosphate site. Lysine 339 is covalently cross-linked (Isoglutamyl lysine isopeptide (Lys-Gln) (interchain with Q-Cter in protein Pup)).

The protein belongs to the class-I pyridoxal-phosphate-dependent aminotransferase family. The cofactor is pyridoxal 5'-phosphate.

The polypeptide is Putative aminotransferase MSMEG_6286/MSMEI_6121 (Mycolicibacterium smegmatis (strain ATCC 700084 / mc(2)155) (Mycobacterium smegmatis)).